The chain runs to 279 residues: Elongation factor Ts (279 aa).

An involved in Mg(2+) ion dislocation from EF-Tu region spans residues 80 to 83 (TDFV).

The protein belongs to the EF-Ts family.

The protein resides in the cytoplasm. Functionally, associates with the EF-Tu.GDP complex and induces the exchange of GDP to GTP. It remains bound to the aminoacyl-tRNA.EF-Tu.GTP complex up to the GTP hydrolysis stage on the ribosome. This is Elongation factor Ts from Borrelia garinii subsp. bavariensis (strain ATCC BAA-2496 / DSM 23469 / PBi) (Borreliella bavariensis).